The following is a 364-amino-acid chain: UDP-3-O-acylglucosamine N-acyltransferase (364 aa).

The active-site Proton acceptor is the His267.

Belongs to the transferase hexapeptide repeat family. LpxD subfamily. Homotrimer.

The catalysed reaction is a UDP-3-O-[(3R)-3-hydroxyacyl]-alpha-D-glucosamine + a (3R)-hydroxyacyl-[ACP] = a UDP-2-N,3-O-bis[(3R)-3-hydroxyacyl]-alpha-D-glucosamine + holo-[ACP] + H(+). It participates in bacterial outer membrane biogenesis; LPS lipid A biosynthesis. Catalyzes the N-acylation of UDP-3-O-acylglucosamine using 3-hydroxyacyl-ACP as the acyl donor. Is involved in the biosynthesis of lipid A, a phosphorylated glycolipid that anchors the lipopolysaccharide to the outer membrane of the cell. The protein is UDP-3-O-acylglucosamine N-acyltransferase of Bordetella petrii (strain ATCC BAA-461 / DSM 12804 / CCUG 43448).